The sequence spans 4836 residues: E3 ubiquitin-protein ligase HERC2 (4836 aa).

A disordered region spans residues 58–90 (LPLRKDDGVDAQSGTKKEDLNDKEKKEEEETPA). Over residues 72–85 (TKKEDLNDKEKKEE) the composition is skewed to basic and acidic residues. Thr273 carries the phosphothreonine modification. Residues 416–462 (PTSHKGSLQEVIGWGLIGWKYYANVIGPIQCEGLASLGVMQVACAEK) form an RCC1 1-1 repeat. The RCC1 1-2 repeat unit spans residues 463-513 (RFLILSRNGRVYTQAYNSDMLAPQLVQGLASRNIVKIAAHSDGHHYLALAA). The stretch at 514 to 569 (TGEVYSWGCGDGGRLGHGDTVPLEEPKVISAFSGKQAGKHVVHIACGSTYSAAITA) is one RCC1 1-3 repeat. Residues 570–621 (EGELYTWGRGNYGRLGHGSSEDEAIPMLVAGLKGLKVIDVACGSGDAQTLAV) form an RCC1 1-4 repeat. The stretch at 624 to 675 (NGQVWSWGDGDYGKLGRGGSDGCKTPKLIEKLQDLDVIKVRCGSQFSIALTK) is one RCC1 1-5 repeat. Phosphothreonine is present on Thr648. The stretch at 676–727 (DGQVYSWGKGDNQRLGHGTEEHVRYPKLLEGLQGKKVIDVAAGSTHCLALTE) is one RCC1 1-6 repeat. An RCC1 1-7 repeat occupies 729-779 (SEVHSWGSNDQCQHFDTLRVTKPEPTALPGLDSKHIVGIACGPAQSFAWSS). Residues 948–981 (ALNAAITAEIQDIEAKKEAQKEKEIDEQEASAST) are a coiled coil. A Cytochrome b5 heme-binding domain is found at 1208-1284 (VTLIRKADLE…MHAFCVGQYL (77 aa)). Ser1578 bears the Phosphoserine mark. The MIB/HERC2 domain maps to 1860-1933 (SGPELAAMMK…KYDLKLVELP (74 aa)). Phosphoserine is present on Ser1943. Phosphothreonine is present on Thr1945. The tract at residues 2351 to 2376 (GTGTLQTDDGAAASPDLGDMSPEGPQ) is disordered. Phosphoserine is present on Ser2455. The CPH domain occupies 2555-2631 (RADFLSNDDY…RYIHVELIGY (77 aa)). A ZZ-type zinc finger spans residues 2704-2756 (HPGVTCDGCQTFPINGSRFKCRNCDDFDFCETCFKTKKHNTRHTFGRINEPGQ). Cys2709, Cys2712, Cys2724, Cys2727, Cys2733, Cys2736, His2742, and His2746 together coordinate Zn(2+). A DOC domain is found at 2760-2937 (FCGRSGKQLK…ASDNEEEEDD (178 aa)). Residues 2928-2947 (ASDNEEEEDDKGSTGSLIRK) are disordered. Phosphoserine is present on Ser2929. The stretch at 2959–3010 (RTKVFVWGLNDKDQLGGLKGSKIKVPSFSETLSALNVVQVAGGSKSLFAVTV) is one RCC1 2-1 repeat. One copy of the RCC1 2-2 repeat lies at 3011–3065 (EGKVYSCGEATNGRLGLGMSSGTVPIPRQITALSSYVVKKVAVHSGGRHATALTV). An RCC1 2-3 repeat occupies 3066–3117 (DGKVFSWGEGDDGKLGHFSRMNCDKPRLIEALKTKRIRDIACGSSHSAALTS). The stretch at 3119–3169 (GELYTWGLGEYGRLGHGDNTTQLKPKMVKVLLGHRVIQVACGSRDAQTLAL) is one RCC1 2-4 repeat. The stretch at 3172–3223 (EGLVFSWGDGDFGKLGRGGSEGCNIPQNIERLNGQGVCQIECGAQFSLALTK) is one RCC1 2-5 repeat. One copy of the RCC1 2-6 repeat lies at 3225–3275 (GVVWTWGKGDYFRLGHGSDVHVRKPQVVEGLRGKKIVHVAVGALHCLAVTD). The RCC1 2-7 repeat unit spans residues 3276-3327 (SGQVYAWGDNDHGQQGNGTTTVNRKPTLVQGLEGQKITRVACGSSHSVAWTT). Disordered regions lie at residues 3479–3499 (DAVT…RPFI), 3517–3537 (KTKE…QSLD), and 3604–3632 (SQSG…SGTV). The span at 3480 to 3495 (AVTPSAVTPSAPSASS) shows a compositional bias: low complexity. Polar residues-rich tracts occupy residues 3604–3613 (SQSGRLSSQP) and 3620–3631 (HPYTDDTSTSGT). The stretch at 3953 to 4004 (SGTIYGWGHNHRGQLGGIEGAKVKVPTPCEALATLRPVQLIGGEQTLFAVTA) is one RCC1 3-1 repeat. The RCC1 3-2 repeat unit spans residues 4006–4058 (GKLYATGYGAGGRLGIGGTESVSTPTLLESIQHVFIKKVAVNSGGKHCLALSS). One copy of the RCC1 3-3 repeat lies at 4060–4110 (GEVYSWGEAEDGKLGHGNRSPCDRPRVIESLRGIEVVDVAAGGAHSACVTA). One copy of the RCC1 3-4 repeat lies at 4112–4164 (GDLYTWGKGRYGRLGHSDSEDQLKPKLVEALQGHRVIDIACGSGDAQTLCLTD). The stretch at 4166–4216 (DTVWSWGDGDYGKLGRGGSDGCKVPMKIDSLTGLGVVKVECGSQFSVALTK) is one RCC1 3-5 repeat. An RCC1 3-6 repeat occupies 4218-4268 (GAVYTWGKGDYHRLGHGSDDHVRRPRQVQGLQGKKVIAIATGSLHCVCCTE). Residues 4270-4320 (GEVYTWGDNDEGQLGDGTTNAIQRPRLVAALQGKKVNRVACGSAHTLAWST) form an RCC1 3-7 repeat. The HECT domain maps to 4459-4796 (DSLLLPHRVW…IHFCKSIDTD (338 aa)). Cys4764 serves as the catalytic Glycyl thioester intermediate. The disordered stretch occupies residues 4806–4836 (EPAADDSSEDSDNEDADSFASDSTQDYLTGH). The span at 4808–4822 (AADDSSEDSDNEDAD) shows a compositional bias: acidic residues. Residues Ser4812, Ser4813, and Ser4816 each carry the phosphoserine modification. Thr4829 bears the Phosphothreonine mark.

Interacts (when phosphorylated at Thr-4829 and sumoylated) with RNF8 (via FHA domain); this interaction increases after ionising radiation (IR) treatment. Interacts with XPA. Interacts with NEURL4. Via its interaction with NEURL4, may indirectly interact with CCP110 and CEP97. In terms of processing, phosphorylation at Thr-4829 is required for interaction with RNF8. Sumoylated with SUMO1 by PIAS4 in response to double-strand breaks (DSBs), promoting the interaction with RNF8. As to expression, highest levels are found in brain and testis with lower levels in heart, lung, liver, skeletal muscle and kidney. Little expression detected in spleen.

It is found in the cytoplasm. The protein resides in the cytoskeleton. It localises to the microtubule organizing center. Its subcellular location is the centrosome. The protein localises to the centriole. It is found in the nucleus. It carries out the reaction S-ubiquitinyl-[E2 ubiquitin-conjugating enzyme]-L-cysteine + [acceptor protein]-L-lysine = [E2 ubiquitin-conjugating enzyme]-L-cysteine + N(6)-ubiquitinyl-[acceptor protein]-L-lysine.. It participates in protein modification; protein ubiquitination. E3 ubiquitin-protein ligase that regulates ubiquitin-dependent retention of repair proteins on damaged chromosomes. Recruited to sites of DNA damage in response to ionizing radiation (IR) and facilitates the assembly of UBE2N and RNF8 promoting DNA damage-induced formation of 'Lys-63'-linked ubiquitin chains. Acts as a mediator of binding specificity between UBE2N and RNF8. Involved in the maintenance of RNF168 levels. E3 ubiquitin-protein ligase that promotes the ubiquitination and proteasomal degradation of XPA which influences the circadian oscillation of DNA excision repair activity. By controlling the steady-state expression of the IGF1R receptor, indirectly regulates the insulin-like growth factor receptor signaling pathway. Also modulates iron metabolism by regulating the basal turnover of FBXL5. This is E3 ubiquitin-protein ligase HERC2 from Mus musculus (Mouse).